A 461-amino-acid polypeptide reads, in one-letter code: L-serine dehydratase (461 aa).

This sequence belongs to the iron-sulfur dependent L-serine dehydratase family. [4Fe-4S] cluster is required as a cofactor.

It catalyses the reaction L-serine = pyruvate + NH4(+). It functions in the pathway carbohydrate biosynthesis; gluconeogenesis. This chain is L-serine dehydratase (sdaA), found in Mycobacterium bovis (strain ATCC BAA-935 / AF2122/97).